The primary structure comprises 317 residues: ADIPOR-like receptor IZH1 (317 aa).

Topologically, residues 1 to 80 are lumenal; it reads MSEERGMKEQ…FNNESINIYT (80 aa). The N-linked (GlcNAc...) asparagine glycan is linked to Asn73. The helical transmembrane segment at 81–101 threads the bilayer; sequence HLIPGVAYLVLFLIFADLVLA. Residues 102–113 are Cytoplasmic-facing; it reads QLLPGLDAGEHR. A helical transmembrane segment spans residues 114–136; the sequence is MLRFYLLGAFTCLACSSCFHCLK. Residues 137 to 148 lie on the Lumenal side of the membrane; sequence QHSEPHSRLWSK. The chain crosses the membrane as a helical span at residues 149–169; sequence VDYLGILAQITCSTISLLYYG. At 170–175 the chain is on the cytoplasmic side; it reads YHSYPS. Residues 176–196 form a helical membrane-spanning segment; the sequence is HFVFFSTLTVALCSACAVLVL. Asn197 carries an N-linked (GlcNAc...) asparagine glycan. Residues 197–210 lie on the Lumenal side of the membrane; the sequence is NDSFNTVAFRPLRA. Residues 211–231 form a helical membrane-spanning segment; that stretch reads FLFMAFGLSGVIPVLAGSYQF. Over 232-243 the chain is Cytoplasmic; that stretch reads GFAEWAARIQLK. Residues 244-264 traverse the membrane as a helical segment; sequence YVLYEAVFYITGALVYGFRIP. Topologically, residues 265–283 are lumenal; it reads ERFAPGKFDMVGHSHQIFH. A helical transmembrane segment spans residues 284-304; that stretch reads LLVVLGTLCHFRAVTGSYIFI. Over 305 to 317 the chain is Cytoplasmic; the sequence is CTGKHYSSLLMFI.

This sequence belongs to the ADIPOR family.

It is found in the endoplasmic reticulum membrane. In terms of biological role, ADIPOR-like receptor involved in zinc metabolism either by altering membrane sterol content or by directly altering cellular zinc levels. The protein is ADIPOR-like receptor IZH1 (IZH1) of Eremothecium gossypii (strain ATCC 10895 / CBS 109.51 / FGSC 9923 / NRRL Y-1056) (Yeast).